The primary structure comprises 621 residues: 1,4-alpha-glucan branching enzyme GlgB (621 aa).

Asp-302 acts as the Nucleophile in catalysis. Catalysis depends on Glu-355, which acts as the Proton donor.

This sequence belongs to the glycosyl hydrolase 13 family. GlgB subfamily. In terms of assembly, monomer.

It carries out the reaction Transfers a segment of a (1-&gt;4)-alpha-D-glucan chain to a primary hydroxy group in a similar glucan chain.. The protein operates within glycan biosynthesis; glycogen biosynthesis. In terms of biological role, catalyzes the formation of the alpha-1,6-glucosidic linkages in glycogen by scission of a 1,4-alpha-linked oligosaccharide from growing alpha-1,4-glucan chains and the subsequent attachment of the oligosaccharide to the alpha-1,6 position. In Dechloromonas aromatica (strain RCB), this protein is 1,4-alpha-glucan branching enzyme GlgB.